A 132-amino-acid polypeptide reads, in one-letter code: Phosphoribosyl-AMP cyclohydrolase (132 aa).

Asp85 lines the Mg(2+) pocket. Cys86 serves as a coordination point for Zn(2+). 2 residues coordinate Mg(2+): Asp87 and Asp89. Residues Cys102 and Cys109 each contribute to the Zn(2+) site.

The protein belongs to the PRA-CH family. Homodimer. Mg(2+) serves as cofactor. It depends on Zn(2+) as a cofactor.

It is found in the cytoplasm. It carries out the reaction 1-(5-phospho-beta-D-ribosyl)-5'-AMP + H2O = 1-(5-phospho-beta-D-ribosyl)-5-[(5-phospho-beta-D-ribosylamino)methylideneamino]imidazole-4-carboxamide. It participates in amino-acid biosynthesis; L-histidine biosynthesis; L-histidine from 5-phospho-alpha-D-ribose 1-diphosphate: step 3/9. In terms of biological role, catalyzes the hydrolysis of the adenine ring of phosphoribosyl-AMP. In Frankia alni (strain DSM 45986 / CECT 9034 / ACN14a), this protein is Phosphoribosyl-AMP cyclohydrolase.